A 275-amino-acid polypeptide reads, in one-letter code: Vitamin B12-binding protein (275 aa).

Residues 1–19 form the signal peptide; sequence MMNKLCFALPLIFSDASFA. The Fe/B12 periplasmic-binding domain maps to 25 to 272; the sequence is RIISLAPHST…EVCEHFETVR (248 aa). A disulfide bond links cysteine 185 and cysteine 265.

Belongs to the BtuF family. The complex is composed of two ATP-binding proteins (BtuD), two transmembrane proteins (BtuC) and a solute-binding protein (BtuF).

The protein localises to the periplasm. Part of the ABC transporter complex BtuCDF involved in vitamin B12 import. Binds vitamin B12 and delivers it to the periplasmic surface of BtuC. This Vibrio campbellii (strain ATCC BAA-1116) protein is Vitamin B12-binding protein.